The following is a 228-amino-acid chain: Cytochrome c oxidase subunit 2 (228 aa).

The Mitochondrial intermembrane segment spans residues 1 to 26 (MRTWSNFNLQNSASPLMEQIIFFHDH). The helical transmembrane segment at 27 to 48 (TLIILIMITILVGYIMINLFFN) threads the bilayer. Over 49-62 (KFINRFFLVGQMIE) the chain is Mitochondrial matrix. The helical transmembrane segment at 63-82 (LIWTVLPAITLIFIALPSLR) threads the bilayer. Residues 83–228 (LLYLLDELNN…FINWINNYSY (146 aa)) lie on the Mitochondrial intermembrane side of the membrane. Cu cation-binding residues include histidine 161, cysteine 196, glutamate 198, cysteine 200, histidine 204, and methionine 207. Glutamate 198 serves as a coordination point for Mg(2+).

It belongs to the cytochrome c oxidase subunit 2 family. Component of the cytochrome c oxidase (complex IV, CIV), a multisubunit enzyme composed of a catalytic core of 3 subunits and several supernumerary subunits. The complex exists as a monomer or a dimer and forms supercomplexes (SCs) in the inner mitochondrial membrane with ubiquinol-cytochrome c oxidoreductase (cytochrome b-c1 complex, complex III, CIII). The cofactor is Cu cation.

It is found in the mitochondrion inner membrane. The enzyme catalyses 4 Fe(II)-[cytochrome c] + O2 + 8 H(+)(in) = 4 Fe(III)-[cytochrome c] + 2 H2O + 4 H(+)(out). Component of the cytochrome c oxidase, the last enzyme in the mitochondrial electron transport chain which drives oxidative phosphorylation. The respiratory chain contains 3 multisubunit complexes succinate dehydrogenase (complex II, CII), ubiquinol-cytochrome c oxidoreductase (cytochrome b-c1 complex, complex III, CIII) and cytochrome c oxidase (complex IV, CIV), that cooperate to transfer electrons derived from NADH and succinate to molecular oxygen, creating an electrochemical gradient over the inner membrane that drives transmembrane transport and the ATP synthase. Cytochrome c oxidase is the component of the respiratory chain that catalyzes the reduction of oxygen to water. Electrons originating from reduced cytochrome c in the intermembrane space (IMS) are transferred via the dinuclear copper A center (CU(A)) of subunit 2 and heme A of subunit 1 to the active site in subunit 1, a binuclear center (BNC) formed by heme A3 and copper B (CU(B)). The BNC reduces molecular oxygen to 2 water molecules using 4 electrons from cytochrome c in the IMS and 4 protons from the mitochondrial matrix. The sequence is that of Cytochrome c oxidase subunit 2 (COII) from Galleria mellonella (Greater wax moth).